The chain runs to 445 residues: Meiosis-specific serine/threonine-protein kinase mek1 (445 aa).

The 55-residue stretch at 62–116 (VSVGRSNTCNYQLLQFTASYKHFRVYSVLIDDDMDPLVYCEDQSSNGTFLNHRLI) folds into the FHA domain. The region spanning 160–421 (NITQRLLGIG…VKQCLSHPWF (262 aa)) is the Protein kinase domain. ATP contacts are provided by residues 166–174 (LGIGGFSRI) and K189. D281 serves as the catalytic Proton acceptor.

This sequence belongs to the protein kinase superfamily. CAMK Ser/Thr protein kinase family. CHEK2 subfamily.

The catalysed reaction is L-seryl-[protein] + ATP = O-phospho-L-seryl-[protein] + ADP + H(+). It catalyses the reaction L-threonyl-[protein] + ATP = O-phospho-L-threonyl-[protein] + ADP + H(+). Its function is as follows. Probable protein kinase required for meiotic recombination. This is Meiosis-specific serine/threonine-protein kinase mek1 (mek1) from Schizosaccharomyces pombe (strain 972 / ATCC 24843) (Fission yeast).